The primary structure comprises 337 residues: 2-oxoglutarate-dependent dioxygenase 19 (337 aa).

A disordered region spans residues 1–25 (MVAPSRLPSHEEQSAAAAADGSATP). The Fe2OG dioxygenase domain occupies 179 to 283 (NLESCFQILV…RMSFVSLIGP (105 aa)). Fe cation contacts are provided by His-208, Asp-210, and His-264. Arg-274 serves as a coordination point for 2-oxoglutarate.

Belongs to the iron/ascorbate-dependent oxidoreductase family. The cofactor is Fe(2+). L-ascorbate is required as a cofactor. Expressed in shoots.

It is found in the cytoplasm. It carries out the reaction melatonin + 2-oxoglutarate + O2 = 2-hydroxymelatonin + succinate + CO2. Its function is as follows. Involved in melatonin degradation. Catalyzes the hydroxylation of melatonin to produce 2-hydroxymelatonin. This chain is 2-oxoglutarate-dependent dioxygenase 19, found in Oryza sativa subsp. japonica (Rice).